The primary structure comprises 385 residues: UPF0284 protein A9601_04941 (385 aa).

It belongs to the UPF0284 family.

This is UPF0284 protein A9601_04941 from Prochlorococcus marinus (strain AS9601).